The following is a 287-amino-acid chain: Ribosomal RNA small subunit methyltransferase I (287 aa).

The protein belongs to the methyltransferase superfamily. RsmI family.

The protein resides in the cytoplasm. The enzyme catalyses cytidine(1402) in 16S rRNA + S-adenosyl-L-methionine = 2'-O-methylcytidine(1402) in 16S rRNA + S-adenosyl-L-homocysteine + H(+). Functionally, catalyzes the 2'-O-methylation of the ribose of cytidine 1402 (C1402) in 16S rRNA. In Helicobacter pylori (strain ATCC 700392 / 26695) (Campylobacter pylori), this protein is Ribosomal RNA small subunit methyltransferase I.